The primary structure comprises 171 residues: S-ribosylhomocysteine lyase (171 aa).

Fe cation is bound by residues His54, His58, and Cys128.

Belongs to the LuxS family. Homodimer. Fe cation is required as a cofactor.

The enzyme catalyses S-(5-deoxy-D-ribos-5-yl)-L-homocysteine = (S)-4,5-dihydroxypentane-2,3-dione + L-homocysteine. In terms of biological role, involved in the synthesis of autoinducer 2 (AI-2) which is secreted by bacteria and is used to communicate both the cell density and the metabolic potential of the environment. The regulation of gene expression in response to changes in cell density is called quorum sensing. Catalyzes the transformation of S-ribosylhomocysteine (RHC) to homocysteine (HC) and 4,5-dihydroxy-2,3-pentadione (DPD). The polypeptide is S-ribosylhomocysteine lyase (Campylobacter curvus (strain 525.92)).